The sequence spans 289 residues: MPTEDRVCFTWEEYARHVREYWRGVAESDGFDSEDIRSPVVLTGLFHYDCQSGRHYPEPLLGTSFELAALLKFNKTMNLTSSYYITLLAHDPSLEKTFQVRVDEREYGSLDLTVAIARPKKDQNEVSDGVFQGPLPDWPSEDALRHDRNRFYELEISEWQATDWISLYLKLLILATDRGMFVQTGLPQVQILEVVIETEEENEKPPDKRLNARRAHVYITFTGLPKSPRLVEIGEHVERKAIIRRVIDASGYLTLLGKFWSGKDTDQQRSMTLPSGEQAESSKKRPRLS.

Residues 266-289 (DQQRSMTLPSGEQAESSKKRPRLS) are disordered. Polar residues predominate over residues 268-279 (QRSMTLPSGEQA).

Belongs to the UPF0725 (EMB2204) family.

This Arabidopsis thaliana (Mouse-ear cress) protein is UPF0725 protein At1g27860.